Consider the following 491-residue polypeptide: MLNLLLLSLSVCLLYVFITAFWNLYIHPLHHIPGPRQWIAFPILRHLSAIRGTLDSDLRRWHFRYGSAVRFGPDEASFITAEAWKDIYGSTRPQLPRVISSGSNTSDIINANDANHARYRKALAHAFSTNGVRDQEPLVIDYIVKLVGRLKEVAESKLPTDMVKWYKLTTFDMIGDLAFGEHFGGLEKSEYHHWVATVGRFTRIIPFLKIMDAYPVLFKVFLAVMPQSFWKAQAEQAEYTKLTVQKRLNSSIAQDRPDFMDSMLRHRNEKDKLSEHELESNASVLVLAGSETPADLLSGVTYWLLKTPEALEKATGEVRSLMKAESEITFSSVEARLPYLLACVNEGLRLYPSLPGELQRMSPDTPMKISGYDIPPRTRVSVHQYAAYSSPTNFHDPDRFIPERWLPEAKTNPSSPYLFDNREVFQPFSVGPRGCIGKSLAYPLMRTIIARVLWNFDFDLCEESRSWHIQKTFGLWEKPPLICKLTQRKQS.

Residues 5–27 (LLLSLSVCLLYVFITAFWNLYIH) traverse the membrane as a helical segment. Cys-435 contacts heme.

It belongs to the cytochrome P450 family. It depends on heme as a cofactor.

The protein localises to the membrane. It functions in the pathway secondary metabolite biosynthesis; terpenoid biosynthesis. Cytochrome P450 monooxygenase; part of the gene cluster that mediates the biosynthesis of 15-deoxyoxalicine B. The first step of the pathway is the synthesis of nicotinyl-CoA from nicotinic acid by the nicotinic acid-CoA ligase olcI. Nicotinyl-CoA is then a substrate of polyketide synthase olcA to produce 4-hydroxy-6-(3-pyridinyl)-2H-pyran-2-one (HPPO) which is further prenylated by the polyprenyl transferase olcH to yield geranylgeranyl-HPPO. Geranylgeranyl pyrophosphate is provided by the cluster-specific geranylgeranyl pyrophosphate synthase olcC. The FAD-dependent monooxygenase olcE catalyzes the epoxidation of geranylgeranyl-HPPO and the terpene cyclase olcD catalyzes the cyclization of the terpenoid component, resulting in the formation of the tricyclic terpene moiety seen in predecaturin E. The cytochrome P450 monooxygenase then catalyzes the allylic oxidation of predecaturin E, which is followed by spirocylization with concomitant loss of one molecule of water to form decaturin E. Decaturin E is the substrate of the cytochrome P450 monooxygenase olcJ which hydroxylates it at the C-29 position to form decaturin F. The short-chain dehydrogenase/reductase olcF may catalyze the oxidation of decaturin F to generate the 29-hydroxyl-27-one intermediate, and subsequent hemiacetal formation probably leads to the formation of decaturin C. The dioxygenase olcK may be a peroxisomal enzyme that catalyzes the hydroxylation of decaturin C into decaturin A once decaturin C is shuttled into the peroxisome by the MFS transporter olcL. Finally the cytochrome P450 monooxygenase olcB catalyzes the oxidative rearrangement to yield 15-deoxyoxalicine B. In the absence of olcJ, decaturin E may be shunted to a pathway in which it is oxidized to a ketone, possibly by olcF, to form decaturin D, which undergoes further allylic oxidation to yield decaturin G. Moreover, in the absence of oclK or oclL, oclB can convert decaturin C into 15-deoxyoxalicine A. The polypeptide is Cytochrome P450 monooxygenase olcB (Penicillium canescens).